A 710-amino-acid polypeptide reads, in one-letter code: Cleavage and polyadenylation factor complex subunit C74.02c (710 aa).

The segment covering Met1–Tyr30 has biased composition (polar residues). 3 disordered regions span residues Met1–Asp42, Ala85–Asn170, and Gly361–Trp510. Low complexity predominate over residues Ser86–Ser108. Residues Asn109–Asn170 are compositionally biased toward polar residues. Composition is skewed to low complexity over residues Gly361 to Ser383 and Leu401 to Lys420. Polar residues predominate over residues Gln421 to Ser430. Over residues Lys437–Ser447 the composition is skewed to basic and acidic residues.

Component of the cleavage and polyadenylation factor (CPF) complex.

Its subcellular location is the cytoplasm. It localises to the nucleus. In terms of biological role, RNA-binding component of the cleavage and polyadenylation factor (CPF) complex, which plays a key role in polyadenylation-dependent pre-mRNA 3'-end formation. Involved in poly(A) site recognition. May be involved in coupling transcription termination and mRNA 3'-end formation. The protein is Cleavage and polyadenylation factor complex subunit C74.02c of Schizosaccharomyces pombe (strain 972 / ATCC 24843) (Fission yeast).